The sequence spans 153 residues: Histone H2B.3 (153 aa).

Composition is skewed to basic and acidic residues over residues 1–10 (MAPKKDEKPA) and 20–54 (AKAE…GEKK). The tract at residues 1-60 (MAPKKDEKPATAEAGAEAPAKAEAKPKAEKAGKKAKKEPAKKAAKEPKGDGEKKDKKKKK) is disordered. N6-acetyllysine occurs at positions 41 and 42. Lysine 149 participates in a covalent cross-link: Glycyl lysine isopeptide (Lys-Gly) (interchain with G-Cter in ubiquitin).

Belongs to the histone H2B family. As to quaternary structure, the nucleosome is a histone octamer containing two molecules each of H2A, H2B, H3 and H4 assembled in one H3-H4 heterotetramer and two H2A-H2B heterodimers. The octamer wraps approximately 147 bp of DNA. Post-translationally, the N-terminus is blocked. In terms of processing, can be acetylated to form H2BK33ac and H2BK34ac. Acetylated mainly on the ubiquitinated form. Monoubiquitinated to form H2BK143ub1; which is increased during the light period and may give a specific tag for epigenetic transcriptional activation.

The protein resides in the nucleus. It is found in the chromosome. Core component of nucleosome. Nucleosomes wrap and compact DNA into chromatin, limiting DNA accessibility to the cellular machineries which require DNA as a template. Histones thereby play a central role in transcription regulation, DNA repair, DNA replication and chromosomal stability. DNA accessibility is regulated via a complex set of post-translational modifications of histones, also called histone code, and nucleosome remodeling. In Chlamydomonas reinhardtii (Chlamydomonas smithii), this protein is Histone H2B.3.